The primary structure comprises 845 residues: Prickle-like protein 2 (845 aa).

The 109-residue stretch at 18–126 (FDFQRSSTSD…NVRPFPVTMT (109 aa)) folds into the PET domain. Position 92 is a phosphoserine (Ser92). 3 consecutive LIM zinc-binding domains span residues 128-193 (AICE…CLKP), 193-253 (PRCA…LYAE), and 253-317 (EYCD…EDPN). Disordered stretches follow at residues 314-346 (EDPNGSDSSDSAFQNARAKESRRSAKIGKNKGK) and 483-546 (YSDM…GSME). A compositionally biased stretch (polar residues) spans 318-327 (GSDSSDSAFQ). A phosphoserine mark is found at Ser319, Ser321, and Ser322. 3 positions are modified to phosphothreonine: Thr535, Thr537, and Thr540. Phosphoserine is present on residues Ser544 and Ser547. The interval 558 to 581 (AEGGAKRQEHLSRFSMPDLSKDSG) is disordered. 2 positions are modified to phosphoserine: Ser608 and Ser643. The disordered stretch occupies residues 642 to 700 (QSFDFDGGIASSKLPGQEGVHIQPMSERTRRRTTSRDDNRRFRPHRSRRSRRSRSDNAL). Over residues 683–693 (FRPHRSRRSRR) the composition is skewed to basic residues. Ser732 bears the Phosphoserine mark. Residues 823–845 (STLGGRGQLHSRKRQKSKNCIIS) form a disordered region. Cys842 is subject to Cysteine methyl ester. A lipid anchor (S-farnesyl cysteine) is attached at Cys842. Positions 843-845 (IIS) are cleaved as a propeptide — removed in mature form.

It belongs to the prickle / espinas / testin family. Expressed in the hippocampus and cerebral cortex.

It is found in the nucleus membrane. This chain is Prickle-like protein 2 (Prickle2), found in Mus musculus (Mouse).